The following is a 310-amino-acid chain: Isoflavone reductase homolog P3 (310 aa).

NADP(+) contacts are provided by residues 12–18 (GGTGYIG), Arg37, and Lys46. Lys134 (proton acceptor) is an active-site residue. Arg138 contributes to the NADP(+) binding site.

The protein belongs to the NmrA-type oxidoreductase family. Isoflavone reductase subfamily.

It is found in the cytoplasm. The sequence is that of Isoflavone reductase homolog P3 from Arabidopsis thaliana (Mouse-ear cress).